The chain runs to 124 residues: Small ribosomal subunit protein uS12 (124 aa).

3-methylthioaspartic acid is present on Asp-89. The interval 102 to 124 (LDTSGVNNRKHGRSKYGTKRPKS) is disordered. Residues 109–124 (NRKHGRSKYGTKRPKS) show a composition bias toward basic residues.

Belongs to the universal ribosomal protein uS12 family. In terms of assembly, part of the 30S ribosomal subunit. Contacts proteins S8 and S17. May interact with IF1 in the 30S initiation complex.

Its function is as follows. With S4 and S5 plays an important role in translational accuracy. Functionally, interacts with and stabilizes bases of the 16S rRNA that are involved in tRNA selection in the A site and with the mRNA backbone. Located at the interface of the 30S and 50S subunits, it traverses the body of the 30S subunit contacting proteins on the other side and probably holding the rRNA structure together. The combined cluster of proteins S8, S12 and S17 appears to hold together the shoulder and platform of the 30S subunit. The chain is Small ribosomal subunit protein uS12 from Francisella tularensis subsp. tularensis (strain FSC 198).